Consider the following 457-residue polypeptide: Squalene epoxidase erg1 (457 aa).

Residues Ile-15–Thr-16, Glu-35–Arg-36, Arg-43, Arg-114, Val-130, Asp-293, and Met-306 each bind FAD. The next 3 membrane-spanning stretches (helical) occupy residues Gly-347–Thr-364, Phe-409–Met-429, and Ile-433–Ser-453.

It belongs to the squalene monooxygenase family. It depends on FAD as a cofactor.

It is found in the microsome membrane. It localises to the endoplasmic reticulum membrane. The protein resides in the vacuole membrane. It catalyses the reaction squalene + reduced [NADPH--hemoprotein reductase] + O2 = (S)-2,3-epoxysqualene + oxidized [NADPH--hemoprotein reductase] + H2O + H(+). Its pathway is terpene metabolism; lanosterol biosynthesis; lanosterol from farnesyl diphosphate: step 2/3. It participates in steroid metabolism; ergosterol biosynthesis. Activity is blocked by the allylamine class antifungal terbinafine. Squalene epoxidase; part of the third module of ergosterol biosynthesis pathway that includes by the late steps of the pathway. Erg1 catalyzes the epoxidation of squalene into 2,3-epoxysqualene. The third module or late pathway involves the ergosterol synthesis itself through consecutive reactions that mainly occur in the endoplasmic reticulum (ER) membrane. Firstly, the squalene synthase erg9 catalyzes the condensation of 2 farnesyl pyrophosphate moieties to form squalene, which is the precursor of all steroids. Secondly, squalene is converted into lanosterol by the consecutive action of the squalene epoxidase erg1 and the lanosterol synthase erg7. The lanosterol 14-alpha-demethylase erg11/cyp1 catalyzes C14-demethylation of lanosterol to produce 4,4'-dimethyl cholesta-8,14,24-triene-3-beta-ol. In the next steps, a complex process involving various demethylation, reduction and desaturation reactions catalyzed by the C-14 reductase erg24 and the C-4 demethylation complex erg25-erg26-erg27 leads to the production of zymosterol. Erg28 likely functions in the C-4 demethylation complex reaction by tethering erg26 and Erg27 to the endoplasmic reticulum or to facilitate interaction between these proteins. Then, the sterol 24-C-methyltransferase erg6 catalyzes the methyl transfer from S-adenosyl-methionine to the C-24 of zymosterol to form fecosterol. The C-8 sterol isomerase erg2 catalyzes the reaction which results in unsaturation at C-7 in the B ring of sterols and thus converts fecosterol to episterol. The sterol-C5-desaturases erg31 and erg32 then catalyze the introduction of a C-5 double bond in the B ring to produce 5-dehydroepisterol. The C-22 sterol desaturase erg5 further converts 5-dehydroepisterol into ergosta-5,7,22,24(28)-tetraen-3beta-ol by forming the C-22(23) double bond in the sterol side chain. Finally, ergosta-5,7,22,24(28)-tetraen-3beta-ol is substrate of the C-24(28) sterol reductase erg4 to produce ergosterol. In the genus Schizosaccharomyces, a second route exists between lanosterol and fecosterol, via the methylation of lanosterol to eburicol by erg6, followed by C14-demethylation by erg11/cyp1 and C4-demethylation by the demethylation complex erg25-erg26-erg27. The protein is Squalene epoxidase erg1 of Schizosaccharomyces pombe (strain 972 / ATCC 24843) (Fission yeast).